The sequence spans 195 residues: Putative manganese efflux pump MntP (195 aa).

6 helical membrane-spanning segments follow: residues 3–23 (LSAT…ASVG), 40–60 (GLIF…LGLL), 68–88 (WDHW…VLAG), 106–126 (VLIA…VGLA), 132–152 (ILHA…IGML), and 165–185 (AEII…YSHI).

The protein belongs to the MntP (TC 9.B.29) family.

The protein resides in the cell inner membrane. Its function is as follows. Probably functions as a manganese efflux pump. The polypeptide is Putative manganese efflux pump MntP (Sodalis glossinidius (strain morsitans)).